The primary structure comprises 565 residues: MRPRSALPRLLLPLLLLPAAGPAQFHGEKGISIPDHGFCQPISIPLCTDIAYNQTIMPNLLGHTNQEDAGLEVHQFYPLVKVQCSPELRFFLCSMYAPVCTVLEQAIPPCRSICERARQGCEALMNKFGFQWPERLRCEHFPRHGAEQICVGQNHSEDGAPALLTTAPPPGLQPGAGGTPGGPGGGGAPPRYATLEHPFHCPRVLKVPSYLSYKFLGERDCAAPCEPARPDGSMFFSQEETRFARLWILTWSVLCCASTFFTVTTYLVDMQRFRYPERPIIFLSGCYTMVSVAYIAGFVLQERVVCNERFSEDGYRTVVQGTKKEGCTILFMMLYFFSMASSIWWVILSLTWFLAAGMKWGHEAIEANSQYFHLAAWAVPAVKTITILAMGQIDGDLLSGVCFVGLNSLDPLRGFVLAPLFVYLFIGTSFLLAGFVSLFRIRTIMKHDGTKTEKLERLMVRIGVFSVLYTVPATIVIACYFYEQAFREHWERSWVSQHCKSLAIPCPAHYTPRMSPDFTVYMIKYLMTLIVGITSGFWIWSGKTLHSWRKFYTRLTNSRHGETTV.

The first 23 residues, 1-23, serve as a signal peptide directing secretion; it reads MRPRSALPRLLLPLLLLPAAGPA. Residues 24 to 247 lie on the Extracellular side of the membrane; sequence QFHGEKGISI…QEETRFARLW (224 aa). Residues 34 to 153 enclose the FZ domain; the sequence is PDHGFCQPIS…HGAEQICVGQ (120 aa). Intrachain disulfides connect cysteine 39-cysteine 100, cysteine 47-cysteine 93, cysteine 84-cysteine 121, cysteine 110-cysteine 150, and cysteine 114-cysteine 138. Asparagine 53 carries N-linked (GlcNAc...) asparagine glycosylation. Asparagine 154 is a glycosylation site (N-linked (GlcNAc...) asparagine). The interval 160–189 is disordered; that stretch reads APALLTTAPPPGLQPGAGGTPGGPGGGGAP. Residues 174–188 show a composition bias toward gly residues; sequence PGAGGTPGGPGGGGA. A helical transmembrane segment spans residues 248 to 268; sequence ILTWSVLCCASTFFTVTTYLV. At 269–279 the chain is on the cytoplasmic side; it reads DMQRFRYPERP. The chain crosses the membrane as a helical span at residues 280-300; it reads IIFLSGCYTMVSVAYIAGFVL. Residues 301–327 lie on the Extracellular side of the membrane; that stretch reads QERVVCNERFSEDGYRTVVQGTKKEGC. Residues 328–348 traverse the membrane as a helical segment; the sequence is TILFMMLYFFSMASSIWWVIL. The Cytoplasmic segment spans residues 349-370; that stretch reads SLTWFLAAGMKWGHEAIEANSQ. The chain crosses the membrane as a helical span at residues 371–391; it reads YFHLAAWAVPAVKTITILAMG. Topologically, residues 392 to 414 are extracellular; that stretch reads QIDGDLLSGVCFVGLNSLDPLRG. The chain crosses the membrane as a helical span at residues 415–435; the sequence is FVLAPLFVYLFIGTSFLLAGF. Over 436-461 the chain is Cytoplasmic; that stretch reads VSLFRIRTIMKHDGTKTEKLERLMVR. The chain crosses the membrane as a helical span at residues 462–482; it reads IGVFSVLYTVPATIVIACYFY. Topologically, residues 483–519 are extracellular; that stretch reads EQAFREHWERSWVSQHCKSLAIPCPAHYTPRMSPDFT. A helical transmembrane segment spans residues 520-540; sequence VYMIKYLMTLIVGITSGFWIW. The Cytoplasmic portion of the chain corresponds to 541 to 565; it reads SGKTLHSWRKFYTRLTNSRHGETTV. A Lys-Thr-X-X-X-Trp motif, mediates interaction with the PDZ domain of Dvl family members motif is present at residues 543-548; sequence KTLHSW. Residues 563–565 carry the PDZ-binding motif; the sequence is TTV.

It belongs to the G-protein coupled receptor Fz/Smo family. In terms of assembly, (Microbial infection) Interacts with C.difficile toxin TcdB; frizzled receptors constitute the major host receptors for TcdB in the colonic epithelium. Post-translationally, ubiquitinated by ZNRF3, leading to its degradation by the proteasome. Widely expressed. In the adult, mainly found in heart, placenta, skeletal muscle, lung, kidney, pancreas, prostate, testis, ovary and colon. In the fetus, expressed in brain, lung and kidney. Low levels in fetal liver.

The protein resides in the membrane. It localises to the cell membrane. Receptor for Wnt proteins. Most of frizzled receptors are coupled to the beta-catenin canonical signaling pathway, which leads to the activation of disheveled proteins, inhibition of GSK-3 kinase, nuclear accumulation of beta-catenin and activation of Wnt target genes. A second signaling pathway involving PKC and calcium fluxes has been seen for some family members, but it is not yet clear if it represents a distinct pathway or if it can be integrated in the canonical pathway, as PKC seems to be required for Wnt-mediated inactivation of GSK-3 kinase. Both pathways seem to involve interactions with G-proteins. May be involved in transduction and intercellular transmission of polarity information during tissue morphogenesis and/or in differentiated tissues. In terms of biological role, (Microbial infection) Acts as a receptor for C.difficile toxin TcdB in the colonic epithelium. TcdB occupies the binding site for Wnt-adducted palmitoleate in frizzled receptors and TcdB-binding prevents Wnt-binding and downstream Wnt signaling. This chain is Frizzled-2 (FZD2), found in Homo sapiens (Human).